The following is a 162-amino-acid chain: MFLSEAGARPRAGEISASERRKWVEVFKACDEDNKGYLSREDFKVAIVMLFGYKPSKIEADAVMSSANPDTSGVSLEGFLNVVQRKKEAQLYRNEIRHIFTAFDVHYRGFLTLEDFKRAFSQVAPKLPSRTVLEVFREADQDSDGHVSFRDFEYAMNHGKAK.

3 EF-hand domains span residues 18 to 53 (SERR…LFGY), 91 to 126 (LYRN…VAPK), and 127 to 162 (LPSR…GKAK). Residues D140, D142, D144, H146, and D151 each coordinate Ca(2+).

This Rattus norvegicus (Rat) protein is EF-hand calcium-binding domain-containing protein 11 (Efcab11).